A 158-amino-acid polypeptide reads, in one-letter code: uncharacterized protein (158 aa).

This is an uncharacterized protein from Mycoplasma pneumoniae (strain ATCC 29342 / M129 / Subtype 1) (Mycoplasmoides pneumoniae).